We begin with the raw amino-acid sequence, 481 residues long: 3-isopropylmalate dehydratase large subunit (481 aa).

[4Fe-4S] cluster is bound by residues C357, C417, and C420.

Belongs to the aconitase/IPM isomerase family. LeuC type 1 subfamily. Heterodimer of LeuC and LeuD. [4Fe-4S] cluster is required as a cofactor.

The enzyme catalyses (2R,3S)-3-isopropylmalate = (2S)-2-isopropylmalate. Its pathway is amino-acid biosynthesis; L-leucine biosynthesis; L-leucine from 3-methyl-2-oxobutanoate: step 2/4. Its function is as follows. Catalyzes the isomerization between 2-isopropylmalate and 3-isopropylmalate, via the formation of 2-isopropylmaleate. The polypeptide is 3-isopropylmalate dehydratase large subunit (Mycolicibacterium gilvum (strain PYR-GCK) (Mycobacterium gilvum (strain PYR-GCK))).